Reading from the N-terminus, the 569-residue chain is Peroxisomal targeting signal receptor (569 aa).

A Glycyl cysteine thioester (Cys-Gly) (interchain with G-Cter in ubiquitin) cross-link involves residue C5. Residues 6–28 are amphipathic helix 1 (AH1); it reads SVGANPLAQLNKRVQQDRTLQHG. K17 is covalently cross-linked (Glycyl lysine isopeptide (Lys-Gly) (interchain with G-Cter in ubiquitin)). The amphipathic helix 2 (AH2) stretch occupies residues 53–71; it reads KFQMEQFMAGKASSGGNMF. The WxxxF/Y motif 1 motif lies at 112 to 116; it reads WSQEF. The tract at residues 150–154 is amphipathic helix 3 (AH3); sequence PMNMM. The WxxxF/Y motif 2 motif lies at 181–185; it reads WEQQF. Residues 229–245 are amphipathic helix 4 (AH4); it reads FQQIWNDIHDQTDDLDS. TPR repeat units follow at residues 281–315, 316–349, 417–450, 452–484, and 486–518; these read NTDA…DPGH, VDAW…DPHN, PDVQ…RPDD, CMWN…KPTF, and RARY…HEVE.

This sequence belongs to the peroxisomal targeting signal receptor family. As to quaternary structure, interacts (via WxxxF/Y and LVxEF motifs) with PEX14; promoting translocation through the PEX13-PEX14 docking complex. In terms of processing, monoubiquitinated at Cys-5 by PEX2 during PEX5 passage through the retrotranslocation channel: monoubiquitination acts as a signal for PEX5 extraction and is required for proper export from peroxisomes and recycling. When PEX5 recycling is compromised, polyubiquitinated at Lys-17 by PEX10 during its passage through the retrotranslocation channel, leading to its degradation.

The protein resides in the cytoplasm. It localises to the cytosol. The protein localises to the peroxisome matrix. Functionally, receptor that mediates peroxisomal import of proteins containing a C-terminal PTS1-type tripeptide peroxisomal targeting signal (SKL-type). Binds to cargo proteins containing a PTS1 peroxisomal targeting signal in the cytosol, and translocates them into the peroxisome matrix by passing through the PEX13-PEX14 docking complex along with cargo proteins. PEX5 receptor is then retrotranslocated into the cytosol, leading to release of bound cargo in the peroxisome matrix, and reset for a subsequent peroxisome import cycle. In Eremothecium gossypii (strain ATCC 10895 / CBS 109.51 / FGSC 9923 / NRRL Y-1056) (Yeast), this protein is Peroxisomal targeting signal receptor (PEX5).